Reading from the N-terminus, the 300-residue chain is ETS homologous factor (300 aa).

The 87-residue stretch at 29-115 (STCNVSSGFF…SNLQHLKWNG (87 aa)) folds into the PNT domain. Residues 183 to 202 (ESPDMKKEQDPPAKCHTKKH) form a disordered region. A compositionally biased stretch (basic and acidic residues) spans 185-195 (PDMKKEQDPPA). Residues 207-289 (THLWEFIRDI…DGRRLVYKFG (83 aa)) constitute a DNA-binding region (ETS).

It belongs to the ETS family. Expressed exclusively in tissues with a high content of epithelial cells. Highly expressed in salivary gland, mammary gland, prostate, and lung. Weakly expressed in kidney and colon. Not detected in heart, brain, placenta, liver, skeletal muscle, spleen, thymus, testis, ovary, small intestine or peripheral blood leukocytes.

It localises to the nucleus. Its function is as follows. Transcriptional activator that may play a role in regulating epithelial cell differentiation and proliferation. May act as a repressor for a specific subset of ETS/AP-1-responsive genes and as a modulator of the nuclear response to mitogen-activated protein kinase signaling cascades. Binds to DNA sequences containing the consensus nucleotide core sequence GGAA. Involved in regulation of TNFRSF10B/DR5 expression through Ets-binding sequences on the TNFRSF10B/DR5 promoter. May contribute to development and carcinogenesis by acting as a tumor suppressor gene or anti-oncogene. This Homo sapiens (Human) protein is ETS homologous factor.